The chain runs to 198 residues: Thymidine kinase (198 aa).

ATP contacts are provided by residues 16 to 23 (GGMYSGKS) and 89 to 92 (EEGQ). Catalysis depends on Glu-90, which acts as the Proton acceptor. Zn(2+)-binding residues include Cys-146, Cys-149, Cys-184, and Cys-187.

The protein belongs to the thymidine kinase family. Homotetramer.

The protein localises to the cytoplasm. The enzyme catalyses thymidine + ATP = dTMP + ADP + H(+). This Dictyoglomus thermophilum (strain ATCC 35947 / DSM 3960 / H-6-12) protein is Thymidine kinase.